Reading from the N-terminus, the 150-residue chain is Clitocypin (150 aa).

The protein belongs to the protease inhibitor I48 family. As to quaternary structure, homodimer. As to expression, uniformly expressed throughout the mature fruiting body (at mRNA and protein level).

Functionally, binds and inhibits cysteine proteinases. Inhibits most strongly papain and cathepsin L, more weakly bromelain and cathepsin B while it is completely ineffective against cathepsin H. The polypeptide is Clitocypin (Cnc1) (Clitocybe nebularis (Clouded agaric)).